The chain runs to 505 residues: 2,3-bisphosphoglycerate-independent phosphoglycerate mutase (505 aa).

Positions 12 and 62 each coordinate Mn(2+). S62 (phosphoserine intermediate) is an active-site residue. Substrate-binding positions include H123, 153-154, R185, R191, 257-260, and K330; these read RD and RPDR. Mn(2+) is bound by residues D397, H401, D438, H439, and H456.

Belongs to the BPG-independent phosphoglycerate mutase family. Monomer. Requires Mn(2+) as cofactor.

The enzyme catalyses (2R)-2-phosphoglycerate = (2R)-3-phosphoglycerate. The protein operates within carbohydrate degradation; glycolysis; pyruvate from D-glyceraldehyde 3-phosphate: step 3/5. Its function is as follows. Catalyzes the interconversion of 2-phosphoglycerate and 3-phosphoglycerate. The sequence is that of 2,3-bisphosphoglycerate-independent phosphoglycerate mutase from Staphylococcus haemolyticus (strain JCSC1435).